The chain runs to 101 residues: NAD(P)H-quinone oxidoreductase subunit 4L, chloroplastic (101 aa).

3 helical membrane passes run 2-22 (ILEH…YGLI), 32-52 (MCLE…SDFF), and 61-81 (IFCI…LAIV).

Belongs to the complex I subunit 4L family. NDH is composed of at least 16 different subunits, 5 of which are encoded in the nucleus.

It is found in the plastid. It localises to the chloroplast thylakoid membrane. The catalysed reaction is a plastoquinone + NADH + (n+1) H(+)(in) = a plastoquinol + NAD(+) + n H(+)(out). The enzyme catalyses a plastoquinone + NADPH + (n+1) H(+)(in) = a plastoquinol + NADP(+) + n H(+)(out). Its function is as follows. NDH shuttles electrons from NAD(P)H:plastoquinone, via FMN and iron-sulfur (Fe-S) centers, to quinones in the photosynthetic chain and possibly in a chloroplast respiratory chain. The immediate electron acceptor for the enzyme in this species is believed to be plastoquinone. Couples the redox reaction to proton translocation, and thus conserves the redox energy in a proton gradient. This Arabidopsis thaliana (Mouse-ear cress) protein is NAD(P)H-quinone oxidoreductase subunit 4L, chloroplastic.